We begin with the raw amino-acid sequence, 1523 residues long: Lysophospholipase nte1 (1523 aa).

Over 1 to 66 (MADGVTLVDS…LPPVPTTMAG (66 aa)) the chain is Cytoplasmic. A helical membrane pass occupies residues 67–87 (WIGWVFSFFFQVIPSVLYWVI). Topologically, residues 88 to 109 (TFSTITLPTWLFTLFSMSLTFT) are lumenal. A helical membrane pass occupies residues 110–130 (MNFTTLLLIVLAMVSTISWFI). The Cytoplasmic portion of the chain corresponds to 131–1523 (RYRFLNMYSR…RTMAPRRASI (1393 aa)). Disordered regions lie at residues 309 to 384 (VPNS…KSVH) and 524 to 545 (RAAT…GVSP). Over residues 370-382 (ESRKHSSRKRRKS) the composition is skewed to basic residues. Residues 681–800 (GGTS…GAVA) and 841–961 (RLTS…IAQR) contribute to the a nucleoside 3',5'-cyclic phosphate site. The PNPLA domain maps to 1220 to 1384 (LVLGGGGARG…IDNLTVDHMK (165 aa)). The short motif at 1224–1229 (GGGARG) is the GXGXXG element. The short motif at 1251-1255 (GTSIG) is the GXSXG element. Ser-1253 functions as the Nucleophile in the catalytic mechanism. Residue Asp-1371 is the Proton acceptor of the active site. A DGA/G motif is present at residues 1371–1373 (DGG). Positions 1502–1523 (LPEETEEKKKLQRTMAPRRASI) are disordered.

This sequence belongs to the NTE family.

It localises to the endoplasmic reticulum membrane. The enzyme catalyses a 1-acyl-sn-glycero-3-phosphocholine + H2O = sn-glycerol 3-phosphocholine + a fatty acid + H(+). Inhibited by organophosphorus esters. In terms of biological role, intracellular phospholipase B that catalyzes the double deacylation of phosphatidylcholine (PC) to glycerophosphocholine (GroPCho). Plays an important role in membrane lipid homeostasis. Responsible for the rapid PC turnover in response to inositol, elevated temperatures, or when choline is present in the growth medium. The chain is Lysophospholipase nte1 (nte1) from Neosartorya fischeri (strain ATCC 1020 / DSM 3700 / CBS 544.65 / FGSC A1164 / JCM 1740 / NRRL 181 / WB 181) (Aspergillus fischerianus).